Here is a 238-residue protein sequence, read N- to C-terminus: Ribonuclease PH (238 aa).

Phosphate contacts are provided by residues arginine 86 and 124–126; that span reads GTR.

The protein belongs to the RNase PH family. Homohexameric ring arranged as a trimer of dimers.

The enzyme catalyses tRNA(n+1) + phosphate = tRNA(n) + a ribonucleoside 5'-diphosphate. Its function is as follows. Phosphorolytic 3'-5' exoribonuclease that plays an important role in tRNA 3'-end maturation. Removes nucleotide residues following the 3'-CCA terminus of tRNAs; can also add nucleotides to the ends of RNA molecules by using nucleoside diphosphates as substrates, but this may not be physiologically important. Probably plays a role in initiation of 16S rRNA degradation (leading to ribosome degradation) during starvation. The sequence is that of Ribonuclease PH from Chromobacterium violaceum (strain ATCC 12472 / DSM 30191 / JCM 1249 / CCUG 213 / NBRC 12614 / NCIMB 9131 / NCTC 9757 / MK).